Reading from the N-terminus, the 106-residue chain is Movement protein TGB2 (106 aa).

Residues 1 to 9 (MPLTPPPDH) lie on the Cytoplasmic side of the membrane. Residues 10–30 (TKVLLVAAIGLSIVASILTYS) form a helical membrane-spanning segment. Residues 31–71 (RNTLPQVGDHSHLLPHGGVYKDGTKTIVYGGPRKLNSLEGG) lie on the Lumenal side of the membrane. A helical transmembrane segment spans residues 72–92 (FNLPVQPWFLVILLSAAIFLL). At 93 to 106 (SCRSGHRRVCGQCH) the chain is on the cytoplasmic side.

It belongs to the Tymovirales TGBp2 protein family.

The protein resides in the host endoplasmic reticulum membrane. Plays a role in viral cell-to-cell propagation, by facilitating genome transport to neighboring plant cells through plasmosdesmata,. This is Movement protein TGB2 from Chrysanthemum morifolium (Florist's daisy).